Here is a 188-residue protein sequence, read N- to C-terminus: NADH-quinone oxidoreductase subunit B 1 (188 aa).

Residues Cys-39, Cys-40, Cys-105, and Cys-134 each contribute to the [4Fe-4S] cluster site.

It belongs to the complex I 20 kDa subunit family. NDH-1 is composed of 14 different subunits. Subunits NuoB, C, D, E, F, and G constitute the peripheral sector of the complex. Requires [4Fe-4S] cluster as cofactor.

The protein localises to the cell inner membrane. The catalysed reaction is a quinone + NADH + 5 H(+)(in) = a quinol + NAD(+) + 4 H(+)(out). Its function is as follows. NDH-1 shuttles electrons from NADH, via FMN and iron-sulfur (Fe-S) centers, to quinones in the respiratory chain. The immediate electron acceptor for the enzyme in this species is believed to be ubiquinone. Couples the redox reaction to proton translocation (for every two electrons transferred, four hydrogen ions are translocated across the cytoplasmic membrane), and thus conserves the redox energy in a proton gradient. The sequence is that of NADH-quinone oxidoreductase subunit B 1 from Solibacter usitatus (strain Ellin6076).